The primary structure comprises 179 residues: uncharacterized protein (179 aa).

Polar residues-rich tracts occupy residues 1–37 and 60–70; these read PLGA…TNPG and IPTQSTTTFRS. 2 disordered regions span residues 1-41 and 60-82; these read PLGA…PSAK and IPTQ…PGRR.

In terms of tissue distribution, component of the acid-soluble and acid-insoluble organic matrix of calcified shell layers (at protein level).

It localises to the secreted. This is an uncharacterized protein from Haliotis asinina (Donkey's ear abalone).